Reading from the N-terminus, the 447-residue chain is MTTILKHLPVGQRIGIAFSGGLDTSAALLWMRQKGAVPYAYTANLGQPDEDDYDAIPRRAMEYGAENARLIDCRKQLVAEGIAAIQCGAFHNTTGGLTYFNTTPLGRAVTGTMLVAAMKEDGVNIWGDGSTYKGNDIERFYRYGLLTNAELQIYKPWLDTDFIDELGGRHEMSEFMIACGFDYKMSVEKAYSTDSNMLGATHEAKDLEFLNSSVKIVNPIMGVKFWDENVKIPAEEVTVRFEQGHPVALNGKTFSDDVELMLEANRIGGRHGLGMSDQIENRIIEAKSRGIYEAPGMALLHIAYERLLTGIHNEDTIEQYHAHGRQLGRLLYQGRWFDSQALMLRDGLQRWVASQITGEVTLELRRGNDYSILNTVSDNLTYKPERLTMEKGDSVFSPDDRIGQLTMRNLDITDTREKLFGYAQSGLLSASSATGLPQVENLENKGK.

ATP-binding positions include 17–25 and Ala-43; that span reads AFSGGLDTS. Tyr-99 contributes to the L-citrulline binding site. ATP is bound by residues Gly-129 and Thr-131. L-aspartate-binding residues include Thr-131, Asn-135, and Asp-136. Asn-135 provides a ligand contact to L-citrulline. Residue Asp-136 participates in ATP binding. Positions 139 and 192 each coordinate L-citrulline. Asp-194 provides a ligand contact to ATP. 3 residues coordinate L-citrulline: Thr-201, Glu-203, and Glu-280.

This sequence belongs to the argininosuccinate synthase family. Type 2 subfamily. In terms of assembly, homotetramer.

The protein localises to the cytoplasm. It catalyses the reaction L-citrulline + L-aspartate + ATP = 2-(N(omega)-L-arginino)succinate + AMP + diphosphate + H(+). The protein operates within amino-acid biosynthesis; L-arginine biosynthesis; L-arginine from L-ornithine and carbamoyl phosphate: step 2/3. This Citrobacter koseri (strain ATCC BAA-895 / CDC 4225-83 / SGSC4696) protein is Argininosuccinate synthase.